Consider the following 112-residue polypeptide: Large ribosomal subunit protein uL22 (112 aa).

It belongs to the universal ribosomal protein uL22 family. In terms of assembly, part of the 50S ribosomal subunit.

In terms of biological role, this protein binds specifically to 23S rRNA; its binding is stimulated by other ribosomal proteins, e.g. L4, L17, and L20. It is important during the early stages of 50S assembly. It makes multiple contacts with different domains of the 23S rRNA in the assembled 50S subunit and ribosome. Functionally, the globular domain of the protein is located near the polypeptide exit tunnel on the outside of the subunit, while an extended beta-hairpin is found that lines the wall of the exit tunnel in the center of the 70S ribosome. This chain is Large ribosomal subunit protein uL22, found in Nitratidesulfovibrio vulgaris (strain ATCC 29579 / DSM 644 / CCUG 34227 / NCIMB 8303 / VKM B-1760 / Hildenborough) (Desulfovibrio vulgaris).